Here is a 96-residue protein sequence, read N- to C-terminus: Large ribosomal subunit protein bL28 (96 aa).

This sequence belongs to the bacterial ribosomal protein bL28 family.

In Methylobacterium sp. (strain 4-46), this protein is Large ribosomal subunit protein bL28.